The following is a 530-amino-acid chain: Calcium/calmodulin-dependent protein kinase type II alpha chain (530 aa).

In terms of domain architecture, Protein kinase spans aspartate 12–isoleucine 272. ATP is bound by residues leucine 20–valine 28 and lysine 43. Aspartate 136 serves as the catalytic Proton acceptor. Threonine 287 carries the phosphothreonine; by autocatalysis modification. A calmodulin-binding region spans residues leucine 291 to lysine 301. 2 positions are modified to phosphothreonine; by autocatalysis: threonine 306 and threonine 307. The segment at isoleucine 320–threonine 358 is disordered. Serine 327 is subject to Phosphoserine.

Belongs to the protein kinase superfamily. CAMK Ser/Thr protein kinase family. CaMK subfamily. In terms of assembly, interacts with CASK. Autophosphorylation at Thr-287 is independent of autophosphorylation at Thr-306 and Thr-307. Expressed at a high level in the central nervous system during the late embryonic stage. In adults, expression is more abundant in the head than in the body.

The catalysed reaction is L-seryl-[protein] + ATP = O-phospho-L-seryl-[protein] + ADP + H(+). It carries out the reaction L-threonyl-[protein] + ATP = O-phospho-L-threonyl-[protein] + ADP + H(+). With respect to regulation, CASK plays a role in regulation of CaMKII autophosphorylation. When complexed with CASK and in the presence Ca[2+]/CaM, autophosphorylation of Thr-287 causes constitutive activation of the kinase. In the absence of Ca[2+]/CaM, autophosphorylation of Thr-306 causes inactivation of the kinase. In terms of biological role, a key regulator of plasticity in synaptic physiology and behavior, alterations in its activity produce pleiotrophic effects that involve synaptic transmission and development as well as various aspects of behavior. Directly modulates eag potassium channels. This chain is Calcium/calmodulin-dependent protein kinase type II alpha chain (CaMKII), found in Drosophila melanogaster (Fruit fly).